The chain runs to 304 residues: GMP synthase [glutamine-hydrolyzing] subunit B (304 aa).

The GMPS ATP-PPase domain maps to 2 to 183 (VKVEKFIPNA…LDLPEEICER (182 aa)). 28–34 (SGGVDSS) is an ATP binding site.

In terms of assembly, heterodimer composed of a glutamine amidotransferase subunit (A) and a GMP-binding subunit (B).

The enzyme catalyses XMP + L-glutamine + ATP + H2O = GMP + L-glutamate + AMP + diphosphate + 2 H(+). The protein operates within purine metabolism; GMP biosynthesis; GMP from XMP (L-Gln route): step 1/1. Functionally, catalyzes the synthesis of GMP from XMP. The chain is GMP synthase [glutamine-hydrolyzing] subunit B from Methanococcoides burtonii (strain DSM 6242 / NBRC 107633 / OCM 468 / ACE-M).